A 221-amino-acid polypeptide reads, in one-letter code: Riboflavin kinase (221 aa).

Residues Met1–Ser92 form an H-T-H motif-like region. The segment at Leu93–Leu221 is riboflavin kinase. Residue Gly102–Ala107 participates in CDP binding. Residues Thr131 and Asn133 each contribute to the Mg(2+) site. FMN is bound by residues Thr188 and Glu196. Glu201 to Arg204 lines the CDP pocket.

This sequence belongs to the archaeal riboflavin kinase family. The cofactor is Mg(2+).

The enzyme catalyses riboflavin + CTP = CDP + FMN + H(+). The protein operates within cofactor biosynthesis; FMN biosynthesis; FMN from riboflavin (CTP route): step 1/1. Functionally, catalyzes the CTP-dependent phosphorylation of riboflavin (vitamin B2) to form flavin mononucleotide (FMN). In Methanospirillum hungatei JF-1 (strain ATCC 27890 / DSM 864 / NBRC 100397 / JF-1), this protein is Riboflavin kinase (ribK).